Consider the following 253-residue polypeptide: Adapter protein MecA (253 aa).

This sequence belongs to the MecA family. In terms of assembly, homodimer.

Functionally, enables the recognition and targeting of unfolded and aggregated proteins to the ClpC protease or to other proteins involved in proteolysis. The chain is Adapter protein MecA from Streptococcus pyogenes serotype M18 (strain MGAS8232).